Consider the following 465-residue polypeptide: Sensor histidine kinase ZraS (465 aa).

Topologically, residues 1 to 14 are cytoplasmic; it reads MSFIRLHKDAAAMW. The chain crosses the membrane as a helical span at residues 15–35; the sequence is LSRLLPAAIFILVGLFSIMVI. Residues 36–203 are Periplasmic-facing; that stretch reads RDYGRESAAA…ATQAREWRNT (168 aa). Residues 204–224 form a helical membrane-spanning segment; sequence LIVLSALAAVLLATLLAFFWY. The Cytoplasmic portion of the chain corresponds to 225-465; that stretch reads QRYQRSHREL…WLPVIARQQD (241 aa). Residues 253 to 461 form the Histidine kinase domain; sequence GVAHEIRNPL…VFTIWLPVIA (209 aa). His-256 bears the Phosphohistidine; by autocatalysis mark.

In terms of processing, autophosphorylated.

The protein localises to the cell inner membrane. The enzyme catalyses ATP + protein L-histidine = ADP + protein N-phospho-L-histidine.. With respect to regulation, activity of the ZraS/ZraR two-component system is repressed by the zinc-bound form of ZraP, which probably interacts with the periplasmic region of ZraS. Functionally, part of the Zra signaling pathway, an envelope stress response (ESR) system composed of the periplasmic accessory protein ZraP, the histidine kinase ZraS and the transcriptional regulator ZraR. The ZraPSR system contributes to antibiotic resistance and is important for membrane integrity in the presence of membrane-targeting biocides. ZraS is a member of the two-component regulatory system ZraS/ZraR. Functions as a membrane-associated sensor kinase that phosphorylates ZraR in response to high concentrations of Zn(2+) or Pb(2+) in the medium. The sequence is that of Sensor histidine kinase ZraS (zraS) from Salmonella typhi.